Reading from the N-terminus, the 272-residue chain is Ribonuclease HII (272 aa).

The RNase H type-2 domain occupies 30 to 221 (GPVAGVDEVG…VRRAAEATGV (192 aa)). A divalent metal cation is bound by residues Asp36, Glu37, and Asp130.

Belongs to the RNase HII family. The cofactor is Mn(2+). Requires Mg(2+) as cofactor.

The protein resides in the cytoplasm. It carries out the reaction Endonucleolytic cleavage to 5'-phosphomonoester.. Functionally, endonuclease that specifically degrades the RNA of RNA-DNA hybrids. In Mycolicibacterium smegmatis (strain ATCC 700084 / mc(2)155) (Mycobacterium smegmatis), this protein is Ribonuclease HII.